We begin with the raw amino-acid sequence, 684 residues long: Actin-related protein 5 (684 aa).

Residues 262–469 are a coiled coil; the sequence is KEKSVIIQLP…ARQKQKQKAN (208 aa). Disordered regions lie at residues 392–443 and 481–500; these read KEKK…PEHY and VNPTNHGNYGEKGEEVEDPE. Residues 402–443 are compositionally biased toward basic and acidic residues; sequence SMKDGRLAQKRKRDEEKEKEKEKEEERDRQEEESFLKDPEHY.

The protein belongs to the actin family. ARP5 subfamily. Component of the chromatin-remodeling Ino80 complex.

The protein localises to the nucleus. Proposed core component of the chromatin remodeling Ino80 complex which is involved in transcriptional regulation, DNA replication and probably DNA repair. In Dictyostelium discoideum (Social amoeba), this protein is Actin-related protein 5 (arpE).